We begin with the raw amino-acid sequence, 256 residues long: Cell division protein FtsQ (256 aa).

The Cytoplasmic segment spans residues 1 to 23; the sequence is MIKAVKMNTSFDKEKVRKHLPGA. Residues 24–44 form a helical membrane-spanning segment; it reads IFLSLVVITSLWLVISTISWM. The Periplasmic segment spans residues 45–256; sequence TDEDRLPLSH…SDDVENKEEN (212 aa). The POTRA domain occupies 50–120; it reads LPLSHMIIQG…ETIKVFVVEH (71 aa).

It belongs to the FtsQ/DivIB family. FtsQ subfamily. Part of a complex composed of FtsB, FtsL and FtsQ.

Its subcellular location is the cell inner membrane. In terms of biological role, essential cell division protein. May link together the upstream cell division proteins, which are predominantly cytoplasmic, with the downstream cell division proteins, which are predominantly periplasmic. May control correct divisome assembly. The protein is Cell division protein FtsQ of Aliivibrio fischeri (strain ATCC 700601 / ES114) (Vibrio fischeri).